Consider the following 131-residue polypeptide: Large ribosomal subunit protein bL19 (131 aa).

Belongs to the bacterial ribosomal protein bL19 family.

In terms of biological role, this protein is located at the 30S-50S ribosomal subunit interface and may play a role in the structure and function of the aminoacyl-tRNA binding site. In Caulobacter sp. (strain K31), this protein is Large ribosomal subunit protein bL19.